We begin with the raw amino-acid sequence, 202 residues long: Recoverin (202 aa).

Residue Gly-2 is the site of N-myristoyl glycine attachment. Cys-39 carries the cysteine sulfenic acid (-SOH) modification. EF-hand domains are found at residues 41-59 (SGRI…FFPE), 61-96 (DPKA…TSAG), 97-132 (KTNQ…IFKM), and 147-182 (TPEK…NKEI). Residues Asp-74, Asn-76, Asp-78, Thr-80, Glu-85, Asp-110, Asp-112, Asn-114, and Glu-121 each coordinate Ca(2+). The segment at 189-192 (EPRK) is interaction with GRK1.

It belongs to the recoverin family. In terms of assembly, homodimer; disulfide-linked. Homodimerization is caused by prolonged intense illumination. May form a complex composed of RHO, GRK1 and RCVRN in a Ca(2+)-dependent manner; RCVRN prevents the interaction between GRK1 and RHO. Interacts (via C-terminus) with GRK1 (via N-terminus); the interaction is Ca(2+)-dependent. The N-terminal glycine is linked to one of four different types of acyl groups. The most abundant is myristoleate (14:1), but 14:0, 14:2, and 12:0 acyl residues are also present. The Ca(2+) induced exposure of the myristoyl group, known as the calcium-myristoyl switch, promotes RCVRN binding to the photoreceptor cell membranes only when intracellular Ca(2+) concentration is high. In terms of processing, oxidation on Cys-39 occurs in response to prolonged intense illumination and results in the formation of disulfide homodimers, and to a lesser extent disulfide-linked heterodimers.

The protein localises to the photoreceptor inner segment. It localises to the cell projection. It is found in the cilium. Its subcellular location is the photoreceptor outer segment. The protein resides in the photoreceptor outer segment membrane. The protein localises to the perikaryon. Acts as a calcium sensor and regulates phototransduction of cone and rod photoreceptor cells. Modulates light sensitivity of cone photoreceptor in dark and dim conditions. In response to high Ca(2+) levels induced by low light levels, prolongs RHO/rhodopsin activation in rod photoreceptor cells by binding to and inhibiting GRK1-mediated phosphorylation of RHO/rhodopsin. Plays a role in scotopic vision/enhances vision in dim light by enhancing signal transfer between rod photoreceptors and rod bipolar cells. Improves rod photoreceptor sensitivity in dim light and mediates response of rod photoreceptors to facilitate detection of change and motion in bright light. This chain is Recoverin (RCVRN), found in Canis lupus familiaris (Dog).